The sequence spans 431 residues: Nuclear receptor subfamily 1 group I member 2 (431 aa).

The segment at residues 35–104 (LQICRVCGDK…RLRKCLESGM (70 aa)) is a DNA-binding region (nuclear receptor). NR C4-type zinc fingers lie at residues 38-58 (CRVC…CEGC) and 74-99 (CPFR…LRKC). A Bipartite nuclear localization signal motif is present at residues 63–89 (RRAMKRNVRLRCPFRKGTCEITRKTRR). Residues 105–142 (KKEMIMSDAAVEQRRALIKRKKREKIEAPPPGGQGLTE) form a hinge region. Residues 143–430 (EQQALIQELM…LMQELFSSTD (288 aa)) enclose the NR LBD domain. Hyperforin is bound by residues Ser244 and 282–285 (ILRF).

The protein belongs to the nuclear hormone receptor family. NR1 subfamily. As to quaternary structure, heterodimer with RXRA. Interacts with NCOA1. Interacts (via domain NR LBD) with CRY1 and CRY2 in a ligand-dependent manner.

It localises to the nucleus. Its function is as follows. Nuclear receptor that binds and is activated by a variety of endogenous and xenobiotic compounds. Transcription factor that activates the transcription of multiple genes involved in the metabolism and secretion of potentially harmful xenobiotics, endogenous compounds and drugs. Response to specific ligands is species-specific, due to differences in the ligand-binding domain. Binds to a response element in the promoters of the CYP3A4 and ABCB1/MDR1 genes. Activated by naturally occurring steroids such as pregnenolone and progesterone, the cholesterol metabolite 5-beta-cholestane-3-alpha,7-alpha,12-alpha-triol, synthetic glucocorticoids and antiglucocorticoids and 16-alpha-carbonitrile (PCN). This chain is Nuclear receptor subfamily 1 group I member 2 (Nr1i2), found in Mus musculus (Mouse).